Consider the following 231-residue polypeptide: Enolase-phosphatase E1 (231 aa).

Belongs to the HAD-like hydrolase superfamily. MasA/MtnC family. In terms of assembly, monomer. Requires Mg(2+) as cofactor.

It carries out the reaction 5-methylsulfanyl-2,3-dioxopentyl phosphate + H2O = 1,2-dihydroxy-5-(methylsulfanyl)pent-1-en-3-one + phosphate. It functions in the pathway amino-acid biosynthesis; L-methionine biosynthesis via salvage pathway; L-methionine from S-methyl-5-thio-alpha-D-ribose 1-phosphate: step 3/6. Its pathway is amino-acid biosynthesis; L-methionine biosynthesis via salvage pathway; L-methionine from S-methyl-5-thio-alpha-D-ribose 1-phosphate: step 4/6. Bifunctional enzyme that catalyzes the enolization of 2,3-diketo-5-methylthiopentyl-1-phosphate (DK-MTP-1-P) into the intermediate 2-hydroxy-3-keto-5-methylthiopentenyl-1-phosphate (HK-MTPenyl-1-P), which is then dephosphorylated to form the acireductone 1,2-dihydroxy-3-keto-5-methylthiopentene (DHK-MTPene). The sequence is that of Enolase-phosphatase E1 from Stenotrophomonas maltophilia (strain K279a).